A 344-amino-acid chain; its full sequence is Bifunctional trans-3-hydroxy-L-proline dehydratase/2-epimerase (344 aa).

The active-site Proton acceptor is the Ser-90. Substrate-binding positions include 91-92 (GS), Asp-252, and 257-258 (GT).

This sequence belongs to the proline racemase family.

It carries out the reaction trans-3-hydroxy-L-proline = 1-pyrroline-2-carboxylate + H2O. The enzyme catalyses trans-3-hydroxy-L-proline = cis-3-hydroxy-D-proline. Its function is as follows. Bifunctional enzyme catalyzing both the dehydration of trans-3-hydroxy-L-proline (t3LHyp) to Delta(1)-pyrroline-2-carboxylate (Pyr2C) and 2-epimerization of t3LHyp to cis-3-hydroxy-D-proline (c3DHyp). No dehydratase activity with L-proline, trans-4-hydroxy-L-proline (t4LHyp), cis-4-hydroxy-L-proline (c4LHyp), D-proline, cis-4-hydroxy-D-proline (c4DHyp), trans-4-hydroxy-D-proline (t4DHyp) or L-serine as substrates. Displays neither t4LHyp epimerase nor proline racemase activity. Is likely involved in a degradation pathway that converts t3LHyp to L-proline, which would allow P.aeruginosa to grow on t3LHyp as a sole carbon source. This is Bifunctional trans-3-hydroxy-L-proline dehydratase/2-epimerase from Pseudomonas aeruginosa (strain ATCC 15692 / DSM 22644 / CIP 104116 / JCM 14847 / LMG 12228 / 1C / PRS 101 / PAO1).